Here is a 127-residue protein sequence, read N- to C-terminus: UPF0325 protein VC_2264 (127 aa).

The protein belongs to the UPF0325 family.

The chain is UPF0325 protein VC_2264 from Vibrio cholerae serotype O1 (strain ATCC 39315 / El Tor Inaba N16961).